The following is a 269-amino-acid chain: Imidazoleglycerol-phosphate dehydratase 1, chloroplastic (269 aa).

2 disordered regions span residues 1 to 31 and 54 to 73; these read MTTAPFVSPSLPRLHSARASPFPKPSVGSGG and SGVGGNGSPMAPEESTVSSR. The transit peptide at 1–52 directs the protein to the chloroplast; sequence MTTAPFVSPSLPRLHSARASPFPKPSVGSGGGVAFPARTYGSSLRLRSAVMS. Substrate-binding positions include glutamate 83, 109 to 117, 135 to 139, arginine 161, and arginine 183; these read HMLDQLASH and HHSNE. 4 residues coordinate Mn(2+): histidine 109, histidine 135, histidine 136, and glutamate 139. The Mn(2+) site is built by histidine 207, histidine 231, histidine 232, and glutamate 235. Residues 231–239 and 261–263 each bind substrate; these read HHIIEATFK and SSK.

Belongs to the imidazoleglycerol-phosphate dehydratase family. Requires Mn(2+) as cofactor.

It localises to the plastid. The protein localises to the chloroplast. It catalyses the reaction D-erythro-1-(imidazol-4-yl)glycerol 3-phosphate = 3-(imidazol-4-yl)-2-oxopropyl phosphate + H2O. It participates in amino-acid biosynthesis; L-histidine biosynthesis; L-histidine from 5-phospho-alpha-D-ribose 1-diphosphate: step 6/9. This chain is Imidazoleglycerol-phosphate dehydratase 1, chloroplastic, found in Triticum aestivum (Wheat).